The sequence spans 330 residues: Succinylglutamate desuccinylase (330 aa).

Residues His53, Glu56, and His147 each contribute to the Zn(2+) site. Residue Glu210 is part of the active site.

This sequence belongs to the AspA/AstE family. Succinylglutamate desuccinylase subfamily. It depends on Zn(2+) as a cofactor.

The catalysed reaction is N-succinyl-L-glutamate + H2O = L-glutamate + succinate. It participates in amino-acid degradation; L-arginine degradation via AST pathway; L-glutamate and succinate from L-arginine: step 5/5. Functionally, transforms N(2)-succinylglutamate into succinate and glutamate. The polypeptide is Succinylglutamate desuccinylase (Yersinia pseudotuberculosis serotype O:1b (strain IP 31758)).